A 275-amino-acid polypeptide reads, in one-letter code: Tumor necrosis factor receptor superfamily member 14 (275 aa).

The N-terminal stretch at 1–38 (MEPLPGWGSAPWSQAPTDNTFRLVPCVFLLNLLQRISA) is a signal peptide. TNFR-Cys repeat units lie at residues 41-75 (SCRQEEFLVGDECCPMCNPGYHVKQVCSEHTGTVC), 77-119 (PCPP…DTVC), and 120-162 (RCIP…DTVC). Intrachain disulfides connect cysteine 42–cysteine 53, cysteine 54–cysteine 67, cysteine 57–cysteine 75, cysteine 78–cysteine 93, cysteine 96–cysteine 111, cysteine 99–cysteine 119, cysteine 121–cysteine 138, and cysteine 144–cysteine 162. 2 N-linked (GlcNAc...) asparagine glycosylation sites follow: asparagine 184 and asparagine 197. A helical membrane pass occupies residues 211-231 (VVSILLPLVIVGAGIAGFLIC).

The protein belongs to the tumor necrosis factor receptor superfamily. In terms of assembly, interacts with TRAF2, TRAF3 and TRAF5. Interacts (via CRD1/TNFR-Cys 1) with CD160; this interaction is direct. Interacts (via CRD1/TNFR-Cys 1) with BTLA; this interaction is direct. In terms of processing, N-glycosylated. In terms of tissue distribution, expressed at mucosal sites including colon and pulmonary epithelial cells. Expressed in naive T cells.

It is found in the cell membrane. Receptor for four distinct ligands: The TNF superfamily members TNFSF14/LIGHT and homotrimeric LTA/lymphotoxin-alpha and the immunoglobulin superfamily members BTLA and CD160, altogether defining a complex stimulatory and inhibitory signaling network. Signals via the TRAF2-TRAF3 E3 ligase pathway to promote immune cell survival and differentiation. Participates in bidirectional cell-cell contact signaling between antigen presenting cells and lymphocytes. In response to ligation of TNFSF14/LIGHT, delivers costimulatory signals to T cells, promoting cell proliferation and effector functions. Interacts with CD160 on NK cells, enhancing IFNG production and anti-tumor immune response. In the context of bacterial infection, acts as a signaling receptor on epithelial cells for CD160 from intraepithelial lymphocytes, triggering the production of antimicrobial proteins and pro-inflammatory cytokines. Upon binding to CD160 on activated CD4+ T cells, down-regulates CD28 costimulatory signaling, restricting memory and alloantigen-specific immune response. May interact in cis (on the same cell) or in trans (on other cells) with BTLA. In cis interactions, appears to play an immune regulatory role inhibiting in trans interactions in naive T cells to maintain a resting state. In trans interactions, can predominate during adaptive immune response to provide survival signals to effector T cells. The sequence is that of Tumor necrosis factor receptor superfamily member 14 from Mus musculus (Mouse).